The chain runs to 186 residues: Ribosome maturation factor RimP (186 aa).

Belongs to the RimP family.

It is found in the cytoplasm. Required for maturation of 30S ribosomal subunits. The protein is Ribosome maturation factor RimP of Rhizorhabdus wittichii (strain DSM 6014 / CCUG 31198 / JCM 15750 / NBRC 105917 / EY 4224 / RW1) (Sphingomonas wittichii).